Here is a 521-residue protein sequence, read N- to C-terminus: U4/U6 small nuclear ribonucleoprotein Prp4 (521 aa).

Lys26 is subject to N6-acetyllysine. 7 WD repeats span residues 228–267, 270–317, 320–359, 362–401, 404–443, 446–486, and 489–521; these read GDDRPISYCHFSPNSKMLATACWSGLCKLWSVPDCNLLHT, GHNT…PVAD, GHTVRVARVMWHPSGRFLGTTCYDRSWRLWDLEAQEEILH, GHSMGVYDIAFHQDGSLAGTGGLDAFGRVWDLRTGRCIMF, GHLKEIYGINFSPNGYHIATGSGDNTCKVWDLRQRRCVYT, AHQN…PLKT, and GHEGKVMGLDISSDGQLIATCSYDRTFKLWMAE.

As to quaternary structure, component of the precatalytic spliceosome (spliceosome B complex). Component of the U4/U6-U5 tri-snRNP complex, a building block of the precatalytic spliceosome (spliceosome B complex). The U4/U6-U5 tri-snRNP complex is composed of the U4, U6 and U5 snRNAs and at least PRPF3, PRPF4, PRPF6, PRPF8, PRPF31, SNRNP200, TXNL4A, SNRNP40, SNRPB, SNRPD1, SNRPD2, SNRPD3, SNRPE, SNRPF, SNRPG, DDX23, CD2BP2, PPIH, SNU13, EFTUD2, SART1 and USP39, plus LSM2, LSM3, LSM4, LSM5, LSM6, LSM7 and LSM8. Interacts directly with PRPF18, PPIH and PRPF3. Part of a heteromeric complex containing PPIH, PRPF3 and PRPF4 that is stable in the absence of RNA. Interacts with ERCC6.

It localises to the nucleus. The protein localises to the nucleus speckle. Plays a role in pre-mRNA splicing as component of the U4/U6-U5 tri-snRNP complex that is involved in spliceosome assembly, and as component of the precatalytic spliceosome (spliceosome B complex). The chain is U4/U6 small nuclear ribonucleoprotein Prp4 (PRPF4) from Pongo abelii (Sumatran orangutan).